Reading from the N-terminus, the 204-residue chain is ATP-dependent Clp protease proteolytic subunit (204 aa).

Serine 101 functions as the Nucleophile in the catalytic mechanism. Residue histidine 126 is part of the active site.

It belongs to the peptidase S14 family. In terms of assembly, component of the chloroplastic Clp protease core complex.

It is found in the plastid. The protein localises to the chloroplast stroma. It catalyses the reaction Hydrolysis of proteins to small peptides in the presence of ATP and magnesium. alpha-casein is the usual test substrate. In the absence of ATP, only oligopeptides shorter than five residues are hydrolyzed (such as succinyl-Leu-Tyr-|-NHMec, and Leu-Tyr-Leu-|-Tyr-Trp, in which cleavage of the -Tyr-|-Leu- and -Tyr-|-Trp bonds also occurs).. Functionally, cleaves peptides in various proteins in a process that requires ATP hydrolysis. Has a chymotrypsin-like activity. Plays a major role in the degradation of misfolded proteins. This Anthoceros angustus (Hornwort) protein is ATP-dependent Clp protease proteolytic subunit.